We begin with the raw amino-acid sequence, 163 residues long: NADH-quinone oxidoreductase subunit I (163 aa).

4Fe-4S ferredoxin-type domains follow at residues 55-84 and 94-123; these read RRYE…IESE and TQYD…ETRV. Residues C64, C67, C70, C74, C103, C106, C109, and C113 each contribute to the [4Fe-4S] cluster site.

This sequence belongs to the complex I 23 kDa subunit family. NDH-1 is composed of 14 different subunits. Subunits NuoA, H, J, K, L, M, N constitute the membrane sector of the complex. [4Fe-4S] cluster is required as a cofactor.

The protein resides in the cell inner membrane. The enzyme catalyses a quinone + NADH + 5 H(+)(in) = a quinol + NAD(+) + 4 H(+)(out). NDH-1 shuttles electrons from NADH, via FMN and iron-sulfur (Fe-S) centers, to quinones in the respiratory chain. The immediate electron acceptor for the enzyme in this species is believed to be ubiquinone. Couples the redox reaction to proton translocation (for every two electrons transferred, four hydrogen ions are translocated across the cytoplasmic membrane), and thus conserves the redox energy in a proton gradient. The polypeptide is NADH-quinone oxidoreductase subunit I (Hydrogenovibrio crunogenus (strain DSM 25203 / XCL-2) (Thiomicrospira crunogena)).